Consider the following 888-residue polypeptide: Glutamate receptor 3 (888 aa).

Residues 1–22 (MGQSVLRAVFFLVLGLLGHSHG) form the signal peptide. Over 23-546 (GFPNTISIGG…GVFSFLDPLA (524 aa)) the chain is Extracellular. N-linked (GlcNAc...) asparagine glycans are attached at residues asparagine 57, asparagine 260, asparagine 374, asparagine 409, and asparagine 416. A disulfide bridge connects residues cysteine 85 and cysteine 334. Proline 502, threonine 504, and arginine 509 together coordinate L-glutamate. The chain crosses the membrane as a helical span at residues 547 to 567 (YEIWMCIVFAYIGVSVVLFLV). At 568-596 (SRFSPYEWHLEDNNEEPRDPQSPPDPPNE) the chain is on the cytoplasmic side. The segment at residues 597–612 (FGIFNSLWFSLGAFMQ) is an intramembrane region (helical; Pore-forming). Residues 613-615 (QGC) lie within the membrane without spanning it. The S-palmitoyl cysteine moiety is linked to residue cysteine 615. At 616-621 (DISPRS) the chain is on the cytoplasmic side. Residues 622–642 (LSGRIVGGVWWFFTLIIISSY) form a helical membrane-spanning segment. Residues 643-817 (TANLAAFLTV…DKTSALSLSN (175 aa)) lie on the Extracellular side of the membrane. The L-glutamate site is built by serine 680, threonine 681, and glutamate 731. Cysteine 744 and cysteine 799 are disulfide-bonded. The helical transmembrane segment at 818-838 (VAGVFYILVGGLGLAMMVALI) threads the bilayer. Topologically, residues 839–888 (EFCYKSRAESKRMKLTKNTQNFKPAPATNTQNYATYREGYNVYGTESVKI) are cytoplasmic. Residue cysteine 841 is the site of S-palmitoyl cysteine attachment. Phosphotyrosine is present on residues tyrosine 871 and tyrosine 881.

It belongs to the glutamate-gated ion channel (TC 1.A.10.1) family. GRIA3 subfamily. Homotetramer or heterotetramer of pore-forming glutamate receptor subunits. Tetramers may be formed by the dimerization of dimers. Interacts with PICK1, GRIP1 and GRIP2. Found in a complex with GRIA1, GRIA2, GRIA4, CNIH2, CNIH3, CACNG2, CACNG3, CACNG4, CACNG5, CACNG7 and CACNG8. Interacts with CACNG5. Found in a complex with GRIA1, GRIA2, GRIA4, DLG4, CACNG8 and CNIH2.

The protein resides in the cell membrane. Its subcellular location is the postsynaptic cell membrane. It localises to the postsynaptic density membrane. The catalysed reaction is Ca(2+)(in) = Ca(2+)(out). Functionally, ionotropic glutamate receptor that functions as a ligand-gated cation channel, gated by L-glutamate and glutamatergic agonists such as alpha-amino-3-hydroxy-5-methyl-4-isoxazolepropionic acid (AMPA), quisqualic acid, and kainic acid. L-glutamate acts as an excitatory neurotransmitter at many synapses in the central nervous system and plays an important role in fast excitatory synaptic transmission by inducing long-term potentiation. Binding of the excitatory neurotransmitter L-glutamate induces a conformation change, leading to the opening of the cation channel, and thereby converts the chemical signal to an electrical impulse upon entry of calcium. The receptor then desensitizes rapidly and enters a transient inactive state, characterized by the presence of bound agonist. In the presence of CACNG8, shows resensitization which is characterized by a delayed accumulation of current flux upon continued application of glutamate. The protein is Glutamate receptor 3 of Rattus norvegicus (Rat).